The primary structure comprises 300 residues: Porphobilinogen deaminase (300 aa).

Residue Cys243 is modified to S-(dipyrrolylmethanemethyl)cysteine.

The protein belongs to the HMBS family. As to quaternary structure, monomer. It depends on dipyrromethane as a cofactor.

It catalyses the reaction 4 porphobilinogen + H2O = hydroxymethylbilane + 4 NH4(+). The protein operates within porphyrin-containing compound metabolism; protoporphyrin-IX biosynthesis; coproporphyrinogen-III from 5-aminolevulinate: step 2/4. Its function is as follows. Tetrapolymerization of the monopyrrole PBG into the hydroxymethylbilane pre-uroporphyrinogen in several discrete steps. This is Porphobilinogen deaminase from Clostridium novyi (strain NT).